Consider the following 140-residue polypeptide: Ribosome maturation factor RimP (140 aa).

The protein belongs to the RimP family.

Its subcellular location is the cytoplasm. Functionally, required for maturation of 30S ribosomal subunits. This chain is Ribosome maturation factor RimP, found in Campylobacter jejuni subsp. jejuni serotype O:23/36 (strain 81-176).